A 315-amino-acid chain; its full sequence is Protein rlx (315 aa).

Positions 263-315 are disordered; the sequence is TEQLKQRRVERAQETKQAHSKISSRDTRESENQRERAKGNNIRIERGDEGLSR.

Functionally, this protein is probably required for relaxation complex formation and plasmid mobilization by conjugative plasmids. The chain is Protein rlx (rlx) from Staphylococcus aureus.